We begin with the raw amino-acid sequence, 161 residues long: Cell division protein SepF 2 (161 aa).

The tract at residues 19 to 47 (EDSEKAPELSSSRETKTKNQNQSKSLLRS) is disordered. Residues 21–35 (SEKAPELSSSRETKT) show a composition bias toward basic and acidic residues.

Belongs to the SepF family. In terms of assembly, homodimer. Interacts with FtsZ.

It localises to the cytoplasm. In terms of biological role, cell division protein that is part of the divisome complex and is recruited early to the Z-ring. Probably stimulates Z-ring formation, perhaps through the cross-linking of FtsZ protofilaments. Its function overlaps with FtsA. This chain is Cell division protein SepF 2, found in Desulforamulus reducens (strain ATCC BAA-1160 / DSM 100696 / MI-1) (Desulfotomaculum reducens).